The following is a 334-amino-acid chain: Phosphate acyltransferase (334 aa).

The protein belongs to the PlsX family. In terms of assembly, homodimer. Probably interacts with PlsY.

It is found in the cytoplasm. The catalysed reaction is a fatty acyl-[ACP] + phosphate = an acyl phosphate + holo-[ACP]. Its pathway is lipid metabolism; phospholipid metabolism. In terms of biological role, catalyzes the reversible formation of acyl-phosphate (acyl-PO(4)) from acyl-[acyl-carrier-protein] (acyl-ACP). This enzyme utilizes acyl-ACP as fatty acyl donor, but not acyl-CoA. This is Phosphate acyltransferase from Mycoplasmopsis agalactiae (strain NCTC 10123 / CIP 59.7 / PG2) (Mycoplasma agalactiae).